A 594-amino-acid polypeptide reads, in one-letter code: Golgi-associated RAB2 interactor protein 4 (594 aa).

Residues 390–525 are disordered; the sequence is AAGLPVSTRQ…SSGSSKRLGR (136 aa). Polar residues predominate over residues 396-406; the sequence is STRQSKSSLSG. Basic and acidic residues-rich tracts occupy residues 408 to 433, 442 to 455, and 468 to 477; these read HGRE…DKAL, TGES…DKIA, and ASRDGKKEKG. Positions 510–521 are enriched in low complexity; the sequence is RSSSTTSSGSSK.

The protein belongs to the GARIN family. In terms of assembly, interacts (via N-terminus) with RAB2B (in GTP-bound form).

The protein resides in the golgi apparatus. In terms of biological role, RAB2B effector protein required for the compacted Golgi morphology, probably through interaction with small GTPase RAB2B. This is Golgi-associated RAB2 interactor protein 4 (GARIN4) from Macaca fascicularis (Crab-eating macaque).